Here is a 791-residue protein sequence, read N- to C-terminus: Ataxin-2 homolog (791 aa).

The span at 1–22 (MATRSVSMKQTSQRAASPNKTQ) shows a compositional bias: polar residues. Disordered regions lie at residues 1–28 (MATR…KKWS), 60–100 (RGGV…QQRV), 112–134 (RTET…GVPL), 235–311 (TRSN…KEGQ), 326–423 (SLDS…TKLG), 452–505 (KPAP…PVSS), 613–634 (NPSQ…GNSS), and 707–791 (PMYG…EAKP). Residues 76 to 96 (SLASSEENVSSVSGSAKSNNS) are compositionally biased toward low complexity. 2 stretches are compositionally biased toward basic and acidic residues: residues 112–125 (RTET…RWMP) and 243–256 (NNKD…EAPH). Positions 326–337 (SLDSKQPSSTKS) are enriched in polar residues. Basic and acidic residues-rich tracts occupy residues 360 to 371 (DSKEPRKEEAEK) and 395 to 418 (SKEE…KETT). Residues 473–486 (SIPSTTPQSPSVVS) are compositionally biased toward low complexity. The span at 487–497 (NGENKPSSSPV) shows a compositional bias: polar residues. 2 stretches are compositionally biased toward low complexity: residues 715 to 725 (SNSQRSFNSSN) and 734 to 760 (NNNA…NTTA). Residues 774–791 (DATEKTEKDASANQEAKP) are compositionally biased toward basic and acidic residues.

It belongs to the ataxin-2 family. As to quaternary structure, interacts with mkt1.

The protein localises to the cytoplasm. Its function is as follows. Involved in post-transcriptional regulation of gene expression, probably by association with mkt1. This is Ataxin-2 homolog from Schizosaccharomyces pombe (strain 972 / ATCC 24843) (Fission yeast).